Reading from the N-terminus, the 414-residue chain is Gamma-glutamyl phosphate reductase (414 aa).

Belongs to the gamma-glutamyl phosphate reductase family.

It is found in the cytoplasm. It catalyses the reaction L-glutamate 5-semialdehyde + phosphate + NADP(+) = L-glutamyl 5-phosphate + NADPH + H(+). Its pathway is amino-acid biosynthesis; L-proline biosynthesis; L-glutamate 5-semialdehyde from L-glutamate: step 2/2. Catalyzes the NADPH-dependent reduction of L-glutamate 5-phosphate into L-glutamate 5-semialdehyde and phosphate. The product spontaneously undergoes cyclization to form 1-pyrroline-5-carboxylate. The sequence is that of Gamma-glutamyl phosphate reductase from Kosmotoga olearia (strain ATCC BAA-1733 / DSM 21960 / TBF 19.5.1).